Reading from the N-terminus, the 962-residue chain is Thrombospondin-3a (962 aa).

Positions 1–23 (MEQMFVHIWVSLVVLMSVWSAQS) are cleaved as a signal peptide. Residues 24–196 (DKKQDVPVID…MDTLKLALGG (173 aa)) enclose the Laminin G-like domain. Residues 277–318 (PRSRCQPNPCFKGVSCMETFEYPGYRCGPCPDGMTGNGTHCQ) enclose the EGF-like 1 domain. Intrachain disulfides connect C281–C292, C286–C303, C306–C317, C323–C335, C329–C344, C347–C371, C377–C390, C384–C399, C402–C414, C420–C434, C428–C444, C446–C457, C473–C480, C485–C505, C521–C541, C544–C564, C580–C600, C603–C623, C641–C661, and C684–C704. The N-linked (GlcNAc...) asparagine glycan is linked to N313. The EGF-like 2; calcium-binding domain occupies 319 to 358 (DIDECSEAQPCYTPGACVNTARGFTCESCPPGMWGPPLSG). Positions 373–412 (DIDECVDLANACTPNSVCINIIGSFRCGQCKTGYVGNQTA) constitute an EGF-like 3; calcium-binding domain. An N-linked (GlcNAc...) asparagine glycan is attached at N409. The EGF-like 4 domain occupies 416–458 (PRKSCSSLSFNPCDANAHCVMQRNGDVSCACNVGWAGNGHTCG). 8 TSP type-3 repeats span residues 459-493 (KDTD…NSGQ), 494-529 (EDAD…NKDQ), 530-552 (QNSD…NIDQ), 553-588 (KDTD…NPMQ), 589-611 (TDRD…NPMQ), 612-649 (TDVD…NSSQ), 650-692 (LDSD…NPNQ), and 693-728 (KDSD…EVTL). Positions 548–704 (PNIDQKDTDS…SDSNGVGDVC (157 aa)) are disordered. Over residues 557 to 570 (SNGEGDACDDDIDG) the composition is skewed to acidic residues. The segment covering 631 to 641 (GDGHQDTRDNC) has biased composition (basic and acidic residues). N-linked (GlcNAc...) asparagine glycosylation is present at N646. Over residues 652 to 669 (SDNDGIGDDCDEDDDNDG) the composition is skewed to acidic residues. A glycan (N-linked (GlcNAc...) asparagine) is linked at N710. C720 and C941 are joined by a disulfide. Residues 732 to 946 (RAYQTVILDP…LRYRCNDTVP (215 aa)) enclose the TSP C-terminal domain. N942 carries N-linked (GlcNAc...) asparagine glycosylation.

This sequence belongs to the thrombospondin family. In terms of assembly, oligomer; disulfide-linked.

Its function is as follows. Adhesive glycoprotein that mediates cell-to-cell and cell-to-matrix interactions. Can bind to fibrinogen, fibronectin, laminin and type V collagen. This Danio rerio (Zebrafish) protein is Thrombospondin-3a (thbs3a).